Here is a 184-residue protein sequence, read N- to C-terminus: Pyridoxal 5'-phosphate synthase subunit PdxT (184 aa).

An L-glutamine-binding site is contributed by 46–48 (GES). The active-site Nucleophile is the cysteine 75. L-glutamine contacts are provided by residues arginine 101 and 129 to 130 (IR). Active-site charge relay system residues include histidine 165 and glutamate 167.

It belongs to the glutaminase PdxT/SNO family. As to quaternary structure, in the presence of PdxS, forms a dodecamer of heterodimers. Only shows activity in the heterodimer.

The enzyme catalyses aldehydo-D-ribose 5-phosphate + D-glyceraldehyde 3-phosphate + L-glutamine = pyridoxal 5'-phosphate + L-glutamate + phosphate + 3 H2O + H(+). The catalysed reaction is L-glutamine + H2O = L-glutamate + NH4(+). The protein operates within cofactor biosynthesis; pyridoxal 5'-phosphate biosynthesis. In terms of biological role, catalyzes the hydrolysis of glutamine to glutamate and ammonia as part of the biosynthesis of pyridoxal 5'-phosphate. The resulting ammonia molecule is channeled to the active site of PdxS. The chain is Pyridoxal 5'-phosphate synthase subunit PdxT from Staphylococcus haemolyticus (strain JCSC1435).